Here is a 242-residue protein sequence, read N- to C-terminus: Zinc-finger homeodomain protein 11 (242 aa).

Residues 31-82 (YKECLKNHAANLGGHALDGCGEFMPSPTATSTDPSSLRCAACGCHRNFHRRD) form a ZF-HD dimerization-type; degenerate zinc finger. Disordered regions lie at residues 83–109 (PSENLNFLTAPPISSPSGTESPPSRHV) and 135–161 (PGPSDQDPTVVRSENSSRGAMRKRTRT). Positions 156–213 (RKRTRTKFTPEQKIKMRAFAEKAGWKINGCDEKSVREFCNEVGIERGVLKVWMHNNKY) form a DNA-binding region, homeobox; atypical.

As to quaternary structure, homo- and heterodimer with other ZFHD proteins. Interacts with HIPP20, HIPP21, HIPP22, HIPP23, HIPP24, HIPP26, HIPP27, HIPP30 and MED25 (via ACID domain). Interacts with NAC019, NAC055 and NAC072 (via NAC binding domain). Binds to ZHD1, ZHD2, ZHD3, ZHD4, ZHD5, ZHD6, ZHD7, ZHD8, ZHD9, ZHD12, ZHD13 and ZHD14. In terms of tissue distribution, expressed in roots, inflorescences, open flowers and seeds. Detected in stems and seedlings.

The protein resides in the nucleus. Transcription factor involved in the up-regulation of several stress-inducible genes. Acts as a transcriptional activator by interacting with MED25 and NAC proteins. Involved in increased drought tolerance. The protein is Zinc-finger homeodomain protein 11 (ZHD11) of Arabidopsis thaliana (Mouse-ear cress).